Reading from the N-terminus, the 102-residue chain is Small ribosomal subunit protein uS10 (102 aa).

Belongs to the universal ribosomal protein uS10 family. As to quaternary structure, part of the 30S ribosomal subunit.

Involved in the binding of tRNA to the ribosomes. The polypeptide is Small ribosomal subunit protein uS10 (Bacillus cereus (strain ATCC 10987 / NRS 248)).